Here is a 485-residue protein sequence, read N- to C-terminus: tRNA sulfurtransferase (485 aa).

The 105-residue stretch at 61–165 (EELIALLQRI…DDKMMLVKAR (105 aa)) folds into the THUMP domain. ATP-binding positions include 183–184 (LI), lysine 265, glycine 287, and glutamine 296. Residues cysteine 344 and cysteine 456 are joined by a disulfide bond. The 80-residue stretch at 404 to 483 (LSENEVILDI…FSNVRVFAKK (80 aa)) folds into the Rhodanese domain. Cysteine 456 acts as the Cysteine persulfide intermediate in catalysis.

The protein belongs to the ThiI family.

Its subcellular location is the cytoplasm. The enzyme catalyses [ThiI sulfur-carrier protein]-S-sulfanyl-L-cysteine + a uridine in tRNA + 2 reduced [2Fe-2S]-[ferredoxin] + ATP + H(+) = [ThiI sulfur-carrier protein]-L-cysteine + a 4-thiouridine in tRNA + 2 oxidized [2Fe-2S]-[ferredoxin] + AMP + diphosphate. It catalyses the reaction [ThiS sulfur-carrier protein]-C-terminal Gly-Gly-AMP + S-sulfanyl-L-cysteinyl-[cysteine desulfurase] + AH2 = [ThiS sulfur-carrier protein]-C-terminal-Gly-aminoethanethioate + L-cysteinyl-[cysteine desulfurase] + A + AMP + 2 H(+). It participates in cofactor biosynthesis; thiamine diphosphate biosynthesis. Its function is as follows. Catalyzes the ATP-dependent transfer of a sulfur to tRNA to produce 4-thiouridine in position 8 of tRNAs, which functions as a near-UV photosensor. Also catalyzes the transfer of sulfur to the sulfur carrier protein ThiS, forming ThiS-thiocarboxylate. This is a step in the synthesis of thiazole, in the thiamine biosynthesis pathway. The sulfur is donated as persulfide by IscS. This Haemophilus influenzae (strain PittEE) protein is tRNA sulfurtransferase.